A 260-amino-acid polypeptide reads, in one-letter code: Electron transfer flavoprotein subunit beta (260 aa).

The protein belongs to the ETF beta-subunit/FixA family. As to quaternary structure, heterodimer of an alpha and a beta subunit. Requires FAD as cofactor. AMP serves as cofactor.

Functionally, the electron transfer flavoprotein serves as a specific electron acceptor for other dehydrogenases. It transfers the electrons to the main respiratory chain via ETF-ubiquinone oxidoreductase (ETF dehydrogenase). The sequence is that of Electron transfer flavoprotein subunit beta (etfB) from Thermoanaerobacterium thermosaccharolyticum (strain ATCC 7956 / DSM 571 / NCIMB 9385 / NCA 3814 / NCTC 13789 / WDCM 00135 / 2032) (Clostridium thermosaccharolyticum).